The following is a 2221-amino-acid chain: RNA-directed RNA polymerase L (2221 aa).

Positions 29–292 (KTVLLSQVNF…SERETLIEAE (264 aa)) are endonuclease. 3 residues coordinate Mn(2+): glutamate 54, aspartate 91, and glutamate 104. Lysine 117 is a catalytic residue. The RdRp catalytic domain maps to 1171–1369 (LDMKSVVRLS…YLSSKLNKFI (199 aa)). Aspartate 1327 provides a ligand contact to Mg(2+).

This sequence belongs to the Bunyavirales RNA polymerase family. As to quaternary structure, homomultimer; the oligomeric structure is essential for the polymerase activity. Interacts with nucleoprotein N. Interacts with protein Z; this interaction inhibits viral transcription and replication, Z partially blocks the product exit tunnel for the releasing nascent RNA product. Requires Mn(2+) as cofactor. Mg(2+) serves as cofactor.

The protein localises to the virion. The protein resides in the host cytoplasm. The catalysed reaction is RNA(n) + a ribonucleoside 5'-triphosphate = RNA(n+1) + diphosphate. RNA-dependent RNA polymerase, which is responsible for the replication and transcription of the viral RNA genome using antigenomic RNA as an intermediate. During transcription, synthesizes subgenomic RNAs and assures their capping by a cap-snatching mechanism, which involves the endonuclease activity cleaving the host capped pre-mRNAs. These short capped RNAs are then used as primers for viral transcription. The 3'-end of subgenomic mRNAs molecules are heterogeneous and not polyadenylated. The replicase function is to direct synthesis of antigenomic and genomic RNA which are encapsidated and non capped. As a consequence of the use of the same enzyme for both transcription and replication, these mechanisms need to be well coordinated. These processes may be regulated by proteins N and Z in a dose-dependent manner. Z protein inhibits the viral polymerase L und thus the viral transcription and RNA synthesis. The polypeptide is RNA-directed RNA polymerase L (Sigmodon hispidus (Hispid cotton rat)).